The following is a 1013-amino-acid chain: DTSEFDPLANKEYTEEQKQKLEQEQKELLSQTTTPELEADDGFIVTSASSAQSTPSISALSGNISPDSQTSDPITKAVRETIIQPQKDNLIEQILKDLAALTDRDLAEQKRKEIEEEKEKDKTLSTFFGNPANREFIDKALENPELKKKLESIEIAGYKNVHNTFSTASGYPGGFKPVQWENQVSASDLRATVVKNDAGDELCTLNETTVKTKPFTVAKQDGTQVQISSYREIDFPIKLDKADGSMHLSMVALKADGTKPSKDKAIYFTAHYEEGPNGKPQLKEISSPKPLKFAGTGDDAIAYIEHGGEIYTLAVTRGKYKEMMKEVELNQGQSVDLSQAEDIIIGQGQSKEQPLITPQQTASSSVESPQYKQQVPPITPTNQPLQPETSQMPQSQQVNPNLLNAATALSGSMQDLLNYVNAGLTKEIDSNKQIDLIKEAATAILHNAKSDIAEKQTNIIALAENTVNNQNLTPDAKVAGVNAVLETIKNDQNTPDLEKSKMLEATVAITLNSENLEPKQKEQMLEKTVDVGLSLKDDASRAAAIDGITDAVIKSNLSTEDKGTMLIAVGDKVNVSELSNAEKQKLLGSVLKKGVEAQVLSPAQQQLMQQNLDKITAEQTKKDTIKKVNDILFDPLSSTELKTTNIQAITSNVLDGPATAEVKGEIIQEITNTVAGSSLEAQDKAEIVKGVGETIATHSDTSLSLPNKALIMASAEKGIVESKTNLPDRELMTKGLVDGIYEGKGGPEITKAVSSGIDNSNINDSEKEALKKAKDAASEATLDIETQNLTEGLKGQNIEEHKPRDDIYNKAQEVINAVNPVIEALEKPKAPVVSAEERIVQETSSILNNISKLAVEKVNNFRAMLSSNGNFKTLEKKKEESIKKVDELVKAFGTKSSTEEQQSFIKANLIDDKTLSKEVRLQTIDKLLQEQTQKQAEAIENPSVKTEDVRVVSGKSELKPISKDTPDIEKAKMVVGRDRVNIKENIKIMGALMNARDSIQSENVNKSTPIKRE.

2 disordered regions span residues 1–73 (DTSE…TSDP) and 348–396 (GQSK…PQSQ). The span at 12 to 27 (EYTEEQKQKLEQEQKE) shows a compositional bias: basic and acidic residues. Positions 47–61 (SASSAQSTPSISALS) are enriched in low complexity. Composition is skewed to polar residues over residues 62 to 73 (GNISPDSQTSDP), 348 to 373 (GQSKEQPLITPQQTASSSVESPQYKQ), and 380 to 396 (PTNQPLQPETSQMPQSQ).

It localises to the cytoplasm. The polypeptide is Antigenic heat-stable 120 kDa protein (sca4) (Rickettsia rhipicephali).